The following is a 373-amino-acid chain: Protein translocase subunit SecF (373 aa).

The next 6 membrane-spanning stretches (helical) occupy residues 26-46, 142-162, 166-186, 193-213, 251-271, and 280-300; these read IWYG…AVRG, WQGL…AFEW, LAAF…YALV, GTVI…VVVF, VVAL…LGAG, and LFVG…PLVA. Residues 322-332 are compositionally biased toward low complexity; the sequence is QGAAKGESAES. A disordered region spans residues 322–373; sequence QGAAKGESAESAADEGAYDADEPDDAAPAVVGPRNQPASRGRGRGRPSGKRR. Over residues 333–346 the composition is skewed to acidic residues; sequence AADEGAYDADEPDD. Over residues 362–373 the composition is skewed to basic residues; sequence GRGRGRPSGKRR.

This sequence belongs to the SecD/SecF family. SecF subfamily. In terms of assembly, forms a complex with SecD. Part of the essential Sec protein translocation apparatus which comprises SecA, SecYEG and auxiliary proteins SecDF. Other proteins may also be involved.

Its subcellular location is the cell membrane. Functionally, part of the Sec protein translocase complex. Interacts with the SecYEG preprotein conducting channel. SecDF uses the proton motive force (PMF) to complete protein translocation after the ATP-dependent function of SecA. This chain is Protein translocase subunit SecF, found in Streptomyces coelicolor (strain ATCC BAA-471 / A3(2) / M145).